Reading from the N-terminus, the 83-residue chain is Acyl carrier protein (83 aa).

In terms of domain architecture, Carrier spans 2–77 (NEILSKIKSI…DANQYIKKYL (76 aa)). At Ser37 the chain carries O-(pantetheine 4'-phosphoryl)serine.

It belongs to the acyl carrier protein (ACP) family. In terms of processing, 4'-phosphopantetheine is transferred from CoA to a specific serine of apo-ACP by AcpS. This modification is essential for activity because fatty acids are bound in thioester linkage to the sulfhydryl of the prosthetic group.

It localises to the cytoplasm. It participates in lipid metabolism; fatty acid biosynthesis. Functionally, carrier of the growing fatty acid chain in fatty acid biosynthesis. The polypeptide is Acyl carrier protein (Karelsulcia muelleri (strain GWSS) (Sulcia muelleri)).